A 257-amino-acid polypeptide reads, in one-letter code: Hydroxyacylglutathione hydrolase (257 aa).

His54, His56, Asp58, His59, His113, Asp137, and His175 together coordinate Zn(2+).

The protein belongs to the metallo-beta-lactamase superfamily. Glyoxalase II family. In terms of assembly, monomer. It depends on Zn(2+) as a cofactor.

It catalyses the reaction an S-(2-hydroxyacyl)glutathione + H2O = a 2-hydroxy carboxylate + glutathione + H(+). It participates in secondary metabolite metabolism; methylglyoxal degradation; (R)-lactate from methylglyoxal: step 2/2. Thiolesterase that catalyzes the hydrolysis of S-D-lactoyl-glutathione to form glutathione and D-lactic acid. This chain is Hydroxyacylglutathione hydrolase, found in Gloeothece citriformis (strain PCC 7424) (Cyanothece sp. (strain PCC 7424)).